We begin with the raw amino-acid sequence, 356 residues long: Phospho-N-acetylmuramoyl-pentapeptide-transferase (356 aa).

The next 10 membrane-spanning stretches (helical) occupy residues 27 to 47 (AAVA…ILML), 73 to 93 (TMGG…WMDL), 97 to 117 (FVWA…LDDY), 134 to 154 (LLVE…RTGT), 163 to 183 (GIVI…IVGF), 195 to 215 (GLAT…VYLS), 232 to 252 (AGEL…FLWF), 258 to 278 (AVFM…TIAV), 285 to 305 (VLVL…IQVF), and 333 to 353 (TVVI…LATL).

Belongs to the glycosyltransferase 4 family. MraY subfamily. The cofactor is Mg(2+).

It is found in the cell inner membrane. It catalyses the reaction UDP-N-acetyl-alpha-D-muramoyl-L-alanyl-gamma-D-glutamyl-meso-2,6-diaminopimeloyl-D-alanyl-D-alanine + di-trans,octa-cis-undecaprenyl phosphate = di-trans,octa-cis-undecaprenyl diphospho-N-acetyl-alpha-D-muramoyl-L-alanyl-D-glutamyl-meso-2,6-diaminopimeloyl-D-alanyl-D-alanine + UMP. Its pathway is cell wall biogenesis; peptidoglycan biosynthesis. Catalyzes the initial step of the lipid cycle reactions in the biosynthesis of the cell wall peptidoglycan: transfers peptidoglycan precursor phospho-MurNAc-pentapeptide from UDP-MurNAc-pentapeptide onto the lipid carrier undecaprenyl phosphate, yielding undecaprenyl-pyrophosphoryl-MurNAc-pentapeptide, known as lipid I. The sequence is that of Phospho-N-acetylmuramoyl-pentapeptide-transferase from Sphingopyxis alaskensis (strain DSM 13593 / LMG 18877 / RB2256) (Sphingomonas alaskensis).